A 245-amino-acid chain; its full sequence is 1-(5-phosphoribosyl)-5-[(5-phosphoribosylamino)methylideneamino] imidazole-4-carboxamide isomerase (245 aa).

Asp-7 functions as the Proton acceptor in the catalytic mechanism. Residue Asp-129 is the Proton donor of the active site.

It belongs to the HisA/HisF family.

Its subcellular location is the cytoplasm. It carries out the reaction 1-(5-phospho-beta-D-ribosyl)-5-[(5-phospho-beta-D-ribosylamino)methylideneamino]imidazole-4-carboxamide = 5-[(5-phospho-1-deoxy-D-ribulos-1-ylimino)methylamino]-1-(5-phospho-beta-D-ribosyl)imidazole-4-carboxamide. The protein operates within amino-acid biosynthesis; L-histidine biosynthesis; L-histidine from 5-phospho-alpha-D-ribose 1-diphosphate: step 4/9. The protein is 1-(5-phosphoribosyl)-5-[(5-phosphoribosylamino)methylideneamino] imidazole-4-carboxamide isomerase of Escherichia coli O7:K1 (strain IAI39 / ExPEC).